Here is a 352-residue protein sequence, read N- to C-terminus: MTIFSIRSQIIIGVISSVILTTIILVIAYKLMWFNGHMTLTLAITTMITSCLTLSICSIFINPLIQKIKQFNIKTKQFINHEKFIDDETFQSPREIKELNDSFNKMAYEINNQMNMIKNEQQEKTEIIQNLAHDLKTPLAGIRSYSEGLRDGVISDPQEVHEAYEILIKQANRLSILFDDITHVINLNTGRSYPLELIQLDQLLVNILQPYEQHIKQENRTLEVNFCTDIDAFYQYRPPIERILTNLLDNALKFSNSGSRIDIIISECKENDVISISIKDEGIGIVPELQSRIFERTFRVEDSRNTKTGGSGLGLYIANELAQQIDASITVQSDLDIGTTMTLTLKKFQFKK.

Transmembrane regions (helical) follow at residues 9 to 29 (QIII…VIAY) and 41 to 61 (TLAI…SIFI). The region spanning 130 to 349 (NLAHDLKTPL…TMTLTLKKFQ (220 aa)) is the Histidine kinase domain. Position 133 is a phosphohistidine; by autocatalysis (histidine 133).

In terms of processing, autophosphorylated.

Its subcellular location is the cell membrane. The enzyme catalyses ATP + protein L-histidine = ADP + protein N-phospho-L-histidine.. In terms of biological role, member of the two-component regulatory system SaeR/SaeS. Probably functions as a membrane-associated protein kinase that upon sensing the appropriate signal, autophosphorylates and in turn activates the cytosolic response regulator SaeR. The chain is Histidine protein kinase SaeS (saeS) from Staphylococcus epidermidis (strain ATCC 35984 / DSM 28319 / BCRC 17069 / CCUG 31568 / BM 3577 / RP62A).